The primary structure comprises 295 residues: Bifunctional protein FolD (295 aa).

NADP(+) contacts are provided by residues 177–179 (GRS) and Ser-202.

It belongs to the tetrahydrofolate dehydrogenase/cyclohydrolase family. In terms of assembly, homodimer.

The catalysed reaction is (6R)-5,10-methylene-5,6,7,8-tetrahydrofolate + NADP(+) = (6R)-5,10-methenyltetrahydrofolate + NADPH. It catalyses the reaction (6R)-5,10-methenyltetrahydrofolate + H2O = (6R)-10-formyltetrahydrofolate + H(+). Its pathway is one-carbon metabolism; tetrahydrofolate interconversion. Functionally, catalyzes the oxidation of 5,10-methylenetetrahydrofolate to 5,10-methenyltetrahydrofolate and then the hydrolysis of 5,10-methenyltetrahydrofolate to 10-formyltetrahydrofolate. The chain is Bifunctional protein FolD from Psychrobacter arcticus (strain DSM 17307 / VKM B-2377 / 273-4).